Reading from the N-terminus, the 266-residue chain is Chymotrypsin-like elastase family member 1 (266 aa).

An N-terminal signal peptide occupies residues 1 to 16 (MLRFLVFASLVLCGHS). The propeptide at 17–26 (TEDVPETDAR) is activation peptide. The Peptidase S1 domain occupies 27-264 (VVGGAEARRN…YISWMNNVIA (238 aa)). A disulfide bond links Cys-56 and Cys-72. The active-site Charge relay system is His-71. The Ca(2+) site is built by Glu-85, Asn-87, Gln-90, and Glu-95. An N-linked (GlcNAc...) asparagine glycan is attached at Asn-87. Catalysis depends on Asp-119, which acts as the Charge relay system. Disulfide bonds link Cys-153/Cys-220, Cys-184/Cys-200, and Cys-210/Cys-240. Ser-214 (charge relay system) is an active-site residue.

This sequence belongs to the peptidase S1 family. Elastase subfamily. Requires Ca(2+) as cofactor.

The protein resides in the secreted. The enzyme catalyses Hydrolysis of proteins, including elastin. Preferential cleavage: Ala-|-Xaa.. Serine proteases that hydrolyze many proteins in addition to elastin. This chain is Chymotrypsin-like elastase family member 1 (Cela1), found in Mus musculus (Mouse).